Consider the following 86-residue polypeptide: MKASMFLALAGLALLFVVCYASESEEKEFSNELLSSVLAVDDNSKGEERECLGFGKGCNPSNDQCCKSSNLVCSRKHRRCKYEIGK.

A signal peptide spans 1–21; sequence MKASMFLALAGLALLFVVCYA. Positions 22 to 49 are excised as a propeptide; sequence SESEEKEFSNELLSSVLAVDDNSKGEER. 3 cysteine pairs are disulfide-bonded: Cys51–Cys66, Cys58–Cys73, and Cys65–Cys80. The residue at position 84 (Ile84) is an Isoleucine amide.

This sequence belongs to the neurotoxin 10 (Hwtx-1) family. 22 (Htx-4) subfamily. Monomer. In terms of tissue distribution, expressed by the venom gland.

Its subcellular location is the secreted. Its function is as follows. Neurotoxin. Selectively blocks neuronal tetrodotoxin-sensitive voltage-gated sodium channels (Nav). Does not affect tetrodotoxin-resistant voltage-gated sodium channels or calcium channels. This is Mu-theraphotoxin-Hhn1c from Cyriopagopus hainanus (Chinese bird spider).